A 114-amino-acid chain; its full sequence is uncharacterized protein (114 aa).

Helical transmembrane passes span 9-29 (LAIFLFFVAVGFIIFIGSFWL) and 75-95 (LVHFFIPVGFGLLFGIAVAII).

It is found in the cell membrane. This is an uncharacterized protein from Mycoplasma pneumoniae (strain ATCC 29342 / M129 / Subtype 1) (Mycoplasmoides pneumoniae).